Here is a 516-residue protein sequence, read N- to C-terminus: Anthranilate synthase component 1 (516 aa).

L-tryptophan contacts are provided by residues S56 and 283-285 (PYM). 324-325 (GT) provides a ligand contact to chorismate. Residue E351 coordinates Mg(2+). Residues Y439, R459, 473–475 (GGG), and G475 contribute to the chorismate site. Mg(2+) is bound at residue E488.

The protein belongs to the anthranilate synthase component I family. In terms of assembly, heterotetramer consisting of two non-identical subunits: a beta subunit (TrpG) and a large alpha subunit (TrpE). Mg(2+) serves as cofactor.

It carries out the reaction chorismate + L-glutamine = anthranilate + pyruvate + L-glutamate + H(+). It participates in amino-acid biosynthesis; L-tryptophan biosynthesis; L-tryptophan from chorismate: step 1/5. With respect to regulation, feedback inhibited by tryptophan. In terms of biological role, part of a heterotetrameric complex that catalyzes the two-step biosynthesis of anthranilate, an intermediate in the biosynthesis of L-tryptophan. In the first step, the glutamine-binding beta subunit (TrpG) of anthranilate synthase (AS) provides the glutamine amidotransferase activity which generates ammonia as a substrate that, along with chorismate, is used in the second step, catalyzed by the large alpha subunit of AS (TrpE) to produce anthranilate. In the absence of TrpG, TrpE can synthesize anthranilate directly from chorismate and high concentrations of ammonia. This is Anthranilate synthase component 1 (trpE) from Mycobacterium bovis (strain ATCC BAA-935 / AF2122/97).